Here is a 1407-residue protein sequence, read N- to C-terminus: Adenylate cyclase, aggregation specific (1407 aa).

Over 1–219 the chain is Cytoplasmic; that stretch reads MASSSPMFND…KGYLHQHYNS (219 aa). The interval 28 to 131 is disordered; that stretch reads NELHDGNGGG…SNSVANGGHL (104 aa). Over residues 51–63 the composition is skewed to polar residues; the sequence is LNKSQNQPYTQYN. A compositionally biased stretch (gly residues) spans 64–75; the sequence is NGGGGGGGGGGH. Low complexity-rich tracts occupy residues 80–90 and 98–115; these read HLNLNSITNNH and PNTLSTPHNNNHNNNNHS. The next 6 helical transmembrane spans lie at 220 to 240, 244 to 264, 276 to 296, 304 to 324, 325 to 345, and 353 to 373; these read QIMLLRITNLIGIVAVSYGFT, IFMLIAIRILCFNLFAFSIFL, LFHPLFLFSFTTFFITILLEY, ILFLYVVIFCCLYALGCLLFI, WMVMCNLMNAICFIIFIFLES, and ISFVIYILTMFLVGASHLYVL. The Cytoplasmic portion of the chain corresponds to 374 to 962; sequence EKFRKESFIA…KYVIINNVVE (589 aa). The Guanylate cyclase 1 domain occupies 438-661; sequence SILCFDIVQF…DTIARSHTLE (224 aa). Mg(2+) is bound by residues Asp-443, Ile-444, and Asp-488. Disordered stretches follow at residues 502–590, 751–799, and 828–876; these read AKKQ…EEIE, KSNN…VLGE, and NDIV…EEDF. Composition is skewed to low complexity over residues 505 to 526, 535 to 581, and 752 to 795; these read QMPNSKSTPLLQSTSSTSVNNI, NNNN…NNSG, and SNNN…SSSS. Over residues 828 to 846 the composition is skewed to polar residues; that stretch reads NDIVSPSLTSNSPILDTTV. Positions 847–871 are enriched in low complexity; that stretch reads NNNNNNNNTNNNNKNQNNIYGNNNN. 5 helical membrane-spanning segments follow: residues 963-979, 992-1012, 1018-1038, 1071-1091, and 1105-1125; these read TKFFLVIGLILHLMFYL, SNVIYLVMGIAFLVYIGLSFT, PLVYQIAFFILLCAFGVCTVL, LSVLFLNLFIFSFFIICSILI, and IGFVIVLLIQICSSYGMKLAM. Residues 1189–1311 enclose the Guanylate cyclase 2 domain; sequence SIMFIQIAGF…DTANTASRMQ (123 aa). The helical transmembrane segment at 1378 to 1398 threads the bilayer; it reads ATPAGIASPLSGTLLGEIGSF. Residues 1399–1407 lie on the Cytoplasmic side of the membrane; that stretch reads TTPRFHLSS.

Belongs to the adenylyl cyclase class-4/guanylyl cyclase family. The cofactor is Mg(2+). In terms of tissue distribution, expressed throughout the structure in the tipped mound and finger. Expressed primarily in the prestalk region of the slug. In the early culminant expression is increased in the posterior prespore and anterior-most regions and expands into the developing stalk. In the mid and late culminant it is expressed throughout the stalk.

It is found in the membrane. The protein resides in the cell projection. The protein localises to the uropodium. It catalyses the reaction ATP = 3',5'-cyclic AMP + diphosphate. With respect to regulation, regulated by cyclic AMP receptor 1 through a guanine nucleotide binding protein and protein CRAC. Both positively and negatively regulated by extracellular cAMP; this regulation is part of the mechanism that establishes the oscillatory cAMP waves during aggregation. Its function is as follows. Coordinates cell aggregation by synthesizing the cAMP that influences differentiation and morphogenesis of cells within a developing multicellular structure. The protein is Adenylate cyclase, aggregation specific (acaA) of Dictyostelium discoideum (Social amoeba).